The chain runs to 269 residues: GATA zinc finger domain-containing protein 1 (269 aa).

The GATA-type zinc finger occupies 9–33 (CSVCKTTSSSMWKKGAQGEILCHHC). The interval 63–115 (ATFASTSATPPQSNGGGGGKQSKQEIHRRSARLRNTKYKSAPAAEKKVSTKGK) is disordered. Residue Lys262 forms a Glycyl lysine isopeptide (Lys-Gly) (interchain with G-Cter in SUMO2) linkage.

Component of a chromatin complex, at least composed of KDM5A, GATAD1 and EMSY. As to expression, ubiquitously expressed among various tissue types. Expressed in left ventricular myocytes.

The protein resides in the nucleus. Its function is as follows. Component of some chromatin complex recruited to chromatin sites methylated 'Lys-4' of histone H3 (H3K4me), with a preference for trimethylated form (H3K4me3). The polypeptide is GATA zinc finger domain-containing protein 1 (GATAD1) (Homo sapiens (Human)).